A 552-amino-acid chain; its full sequence is Probable glucomannan 4-beta-mannosyltransferase 10 (552 aa).

Residues Ile-62–Ile-82 traverse the membrane as a helical segment. Asp-161 is an active-site residue. Asp-220 and Asp-222 together coordinate substrate. Asp-314 is an active-site residue. 4 helical membrane-spanning segments follow: residues Ile-393 to Phe-413, Ile-430 to Leu-450, Glu-509 to Thr-529, and Leu-530 to Val-550.

This sequence belongs to the glycosyltransferase 2 family. Plant cellulose synthase-like A subfamily.

It localises to the golgi apparatus membrane. It carries out the reaction GDP-mannose + (glucomannan)n = GDP + (glucomannan)n+1.. Functionally, probable mannan synthase which consists of a 4-beta-mannosyltransferase activity on mannan using GDP-mannose. The beta-1,4-mannan product is the backbone for galactomannan synthesis by galactomannan galactosyltransferase. Galactomannan is a noncellulosic polysaccharides of plant cell wall. The sequence is that of Probable glucomannan 4-beta-mannosyltransferase 10 from Arabidopsis thaliana (Mouse-ear cress).